We begin with the raw amino-acid sequence, 206 residues long: N-(5'-phosphoribosyl)anthranilate isomerase (206 aa).

It belongs to the TrpF family.

It catalyses the reaction N-(5-phospho-beta-D-ribosyl)anthranilate = 1-(2-carboxyphenylamino)-1-deoxy-D-ribulose 5-phosphate. Its pathway is amino-acid biosynthesis; L-tryptophan biosynthesis; L-tryptophan from chorismate: step 3/5. The polypeptide is N-(5'-phosphoribosyl)anthranilate isomerase (Rubrobacter xylanophilus (strain DSM 9941 / JCM 11954 / NBRC 16129 / PRD-1)).